Consider the following 698-residue polypeptide: DNA-directed RNA polymerase subunit beta' (698 aa).

Zn(2+) is bound by residues C69, C71, C89, and C92. Mg(2+) contacts are provided by D509, D511, and D513.

It belongs to the RNA polymerase beta' chain family. RpoC1 subfamily. As to quaternary structure, in plastids the minimal PEP RNA polymerase catalytic core is composed of four subunits: alpha, beta, beta', and beta''. When a (nuclear-encoded) sigma factor is associated with the core the holoenzyme is formed, which can initiate transcription. Mg(2+) serves as cofactor. Zn(2+) is required as a cofactor.

The protein resides in the plastid. Its subcellular location is the chloroplast. It catalyses the reaction RNA(n) + a ribonucleoside 5'-triphosphate = RNA(n+1) + diphosphate. In terms of biological role, DNA-dependent RNA polymerase catalyzes the transcription of DNA into RNA using the four ribonucleoside triphosphates as substrates. The sequence is that of DNA-directed RNA polymerase subunit beta' from Cryptomeria japonica (Japanese cedar).